We begin with the raw amino-acid sequence, 207 residues long: dITP/XTP pyrophosphatase (207 aa).

7 to 12 (SNNAKK) is a binding site for substrate. D72 (proton acceptor) is an active-site residue. Position 72 (D72) interacts with Mg(2+). Substrate is bound by residues S73, 155-158 (FGYD), K184, and 189-190 (HR).

Belongs to the HAM1 NTPase family. Homodimer. Mg(2+) serves as cofactor.

It catalyses the reaction XTP + H2O = XMP + diphosphate + H(+). It carries out the reaction dITP + H2O = dIMP + diphosphate + H(+). The enzyme catalyses ITP + H2O = IMP + diphosphate + H(+). In terms of biological role, pyrophosphatase that catalyzes the hydrolysis of nucleoside triphosphates to their monophosphate derivatives, with a high preference for the non-canonical purine nucleotides XTP (xanthosine triphosphate), dITP (deoxyinosine triphosphate) and ITP. Seems to function as a house-cleaning enzyme that removes non-canonical purine nucleotides from the nucleotide pool, thus preventing their incorporation into DNA/RNA and avoiding chromosomal lesions. This is dITP/XTP pyrophosphatase from Corynebacterium efficiens (strain DSM 44549 / YS-314 / AJ 12310 / JCM 11189 / NBRC 100395).